A 225-amino-acid chain; its full sequence is MEQEICVIGFSGGQDSTTLAVWAKKRFKKVCLVGFDYAQKHSVELECAQKIASLLQLPYEIIPLDFLENITHSALFKNSNDLMGHSHAQNKDLPNSFVPNRNAIFITLLHSYAQKLGASNIALGVSQADFSGYPDCKEDFIKSIEHALNLGSNTAIKIVTPLMFLSKAQEFQMAKDLGVLDLIIKETHTCYQGERKILHAYGYGCDKCPACQLRKKGFEEFQAML.

Position 10–20 (10–20 (FSGGQDSTTLA)) interacts with ATP. Cysteine 190, cysteine 205, cysteine 208, and cysteine 211 together coordinate Zn(2+).

It belongs to the QueC family. Zn(2+) serves as cofactor.

It catalyses the reaction 7-carboxy-7-deazaguanine + NH4(+) + ATP = 7-cyano-7-deazaguanine + ADP + phosphate + H2O + H(+). It participates in purine metabolism; 7-cyano-7-deazaguanine biosynthesis. Functionally, catalyzes the ATP-dependent conversion of 7-carboxy-7-deazaguanine (CDG) to 7-cyano-7-deazaguanine (preQ(0)). This Helicobacter pylori (strain J99 / ATCC 700824) (Campylobacter pylori J99) protein is 7-cyano-7-deazaguanine synthase.